A 130-amino-acid polypeptide reads, in one-letter code: Small ribosomal subunit protein uS8 (130 aa).

It belongs to the universal ribosomal protein uS8 family. Part of the 30S ribosomal subunit.

In terms of biological role, one of the primary rRNA binding proteins, it binds directly to 16S rRNA central domain where it helps coordinate assembly of the platform of the 30S subunit. This is Small ribosomal subunit protein uS8 from Natronomonas pharaonis (strain ATCC 35678 / DSM 2160 / CIP 103997 / JCM 8858 / NBRC 14720 / NCIMB 2260 / Gabara) (Halobacterium pharaonis).